Reading from the N-terminus, the 389-residue chain is S-adenosylmethionine synthase (389 aa).

ATP is bound at residue His-17. Asp-19 is a binding site for Mg(2+). Glu-45 is a binding site for K(+). Positions 58 and 102 each coordinate L-methionine. Positions Gln-102–Ala-112 are flexible loop. Residues Asp-167–Lys-169, Asp-241, Arg-247–Lys-248, Ala-264, and Lys-268 contribute to the ATP site. Residue Asp-241 participates in L-methionine binding. Lys-272 contacts L-methionine.

Belongs to the AdoMet synthase family. Homotetramer; dimer of dimers. The cofactor is Mg(2+). K(+) is required as a cofactor.

It is found in the cytoplasm. It carries out the reaction L-methionine + ATP + H2O = S-adenosyl-L-methionine + phosphate + diphosphate. It participates in amino-acid biosynthesis; S-adenosyl-L-methionine biosynthesis; S-adenosyl-L-methionine from L-methionine: step 1/1. Catalyzes the formation of S-adenosylmethionine (AdoMet) from methionine and ATP. The overall synthetic reaction is composed of two sequential steps, AdoMet formation and the subsequent tripolyphosphate hydrolysis which occurs prior to release of AdoMet from the enzyme. This Parvibaculum lavamentivorans (strain DS-1 / DSM 13023 / NCIMB 13966) protein is S-adenosylmethionine synthase.